We begin with the raw amino-acid sequence, 680 residues long: Methionine--tRNA ligase (680 aa).

Residues 15–25 carry the 'HIGH' region motif; that stretch reads PYANGPVHIGH. Residues Cys147, Cys150, Cys160, and Cys163 each contribute to the Zn(2+) site. The 'KMSKS' region signature appears at 332 to 336; that stretch reads KISTS. ATP is bound at residue Thr335. A tRNA-binding domain is found at 578 to 680; sequence EFEKLDIRVG…REVKPGSEVK (103 aa).

It belongs to the class-I aminoacyl-tRNA synthetase family. MetG type 1 subfamily. In terms of assembly, homodimer. Zn(2+) is required as a cofactor.

Its subcellular location is the cytoplasm. It carries out the reaction tRNA(Met) + L-methionine + ATP = L-methionyl-tRNA(Met) + AMP + diphosphate. Functionally, is required not only for elongation of protein synthesis but also for the initiation of all mRNA translation through initiator tRNA(fMet) aminoacylation. The sequence is that of Methionine--tRNA ligase from Phocaeicola vulgatus (strain ATCC 8482 / DSM 1447 / JCM 5826 / CCUG 4940 / NBRC 14291 / NCTC 11154) (Bacteroides vulgatus).